We begin with the raw amino-acid sequence, 288 residues long: Diaminopimelate epimerase (288 aa).

Substrate-binding residues include asparagine 14 and asparagine 67. Cysteine 76 functions as the Proton donor in the catalytic mechanism. Residues 77-78 (GN), asparagine 166, asparagine 199, and 217-218 (ER) contribute to the substrate site. Cysteine 226 serves as the catalytic Proton acceptor. 227–228 (GT) serves as a coordination point for substrate.

Belongs to the diaminopimelate epimerase family. In terms of assembly, homodimer.

The protein localises to the cytoplasm. It catalyses the reaction (2S,6S)-2,6-diaminopimelate = meso-2,6-diaminopimelate. The protein operates within amino-acid biosynthesis; L-lysine biosynthesis via DAP pathway; DL-2,6-diaminopimelate from LL-2,6-diaminopimelate: step 1/1. In terms of biological role, catalyzes the stereoinversion of LL-2,6-diaminopimelate (L,L-DAP) to meso-diaminopimelate (meso-DAP), a precursor of L-lysine and an essential component of the bacterial peptidoglycan. The polypeptide is Diaminopimelate epimerase (Bacillus mycoides (strain KBAB4) (Bacillus weihenstephanensis)).